Consider the following 1012-residue polypeptide: Cellulose synthase-like protein D5 (1012 aa).

The tract at residues 1 to 81 is disordered; sequence MSVDYANYTV…ARVPAPSSNK (81 aa). A compositionally biased stretch (low complexity) spans 20 to 37; sequence PSGGAPPAAPSAGGARPG. Residues 57 to 69 are compositionally biased toward basic and acidic residues; it reads GGGDDGAKMDRRL. 2 helical membrane passes run 150 to 170 and 180 to 200; these read ILSP…LFLV and ALWL…SWLL. Asp280 is a catalytic residue. Positions 597–620 are disordered; that stretch reads PRQGSEAMPGAGGGRSGGGSVGGD. Residues 606-618 show a composition bias toward gly residues; sequence GAGGGRSGGGSVG. Asp717 is a catalytic residue. Helical transmembrane passes span 799–819, 825–845, 871–891, 914–934, 948–968, and 978–998; these read LFLI…QFIV, TFLS…LLEV, LAAV…SFTL, SLFI…VVGV, LLGG…FAKG, and TIVY…WITI.

This sequence belongs to the glycosyltransferase 2 family. Plant cellulose synthase-like D subfamily.

It localises to the golgi apparatus membrane. Thought to be a Golgi-localized beta-glycan synthase that polymerize the backbones of noncellulosic polysaccharides (hemicelluloses) of plant cell wall. This Oryza sativa subsp. japonica (Rice) protein is Cellulose synthase-like protein D5 (CSLD5).